A 64-amino-acid chain; its full sequence is Large ribosomal subunit protein bL28 (64 aa).

The protein belongs to the bacterial ribosomal protein bL28 family.

This chain is Large ribosomal subunit protein bL28, found in Campylobacter lari (strain RM2100 / D67 / ATCC BAA-1060).